The sequence spans 62 residues: Alkaline proteinase (62 aa).

The Peptidase S8 domain occupies glycine 1–serine 62. Aspartate 21 acts as the Charge relay system in catalysis.

The protein resides in the secreted. With respect to regulation, inhibited by phenylmethanesulfonyl fluoride (PMSF) and chymostatin (CST), but not by Bowman-Birk type trypsin-chymotrypsin inhibitor (BBI). Functionally, serine protease. May be involved in the invasion of grains and hydrolysis of grain proteins. This Fusarium culmorum protein is Alkaline proteinase.